The chain runs to 371 residues: MPLSLFRRLLLAVLLLVIIWTLFGPSGLGEELLSLSLASLLPAPASPGPPLALPRLLIPNPQACGGSGPPPFLLILVCTAPEHLNQRNAIRGSWGAIREARGFRVQTLFLLGEPMGQQFADLASESAAQGDVLQASFQDSYRNLTLKTLTGLNWVNKYCPMARYILKTDDDVYVNVPELVSELIQRGGPSEQWQKGKEPQEETTAVHKEHKGQAVPLLYLGRVHWRVRPTRTPESRHHVSEELWPENWGPFPPYASGTGYVLSISAVQLILKVASRAPYLPLEDVFVGVSARRVGLAPTHCVKLAGATHYPLDRCCYGKFLLTSHKVDPWKMQEAWKLVRGLNGRRTEPFCSWLQGFLGTLRCRFIAWLNS.

The Cytoplasmic portion of the chain corresponds to 1–4 (MPLS). A helical; Signal-anchor for type II membrane protein transmembrane segment spans residues 5 to 25 (LFRRLLLAVLLLVIIWTLFGP). Topologically, residues 26–371 (SGLGEELLSL…RCRFIAWLNS (346 aa)) are lumenal. N-linked (GlcNAc...) asparagine glycosylation occurs at Asn143. The tract at residues 187–208 (GGPSEQWQKGKEPQEETTAVHK) is disordered. Residues 194–207 (QKGKEPQEETTAVH) show a composition bias toward basic and acidic residues.

It belongs to the glycosyltransferase 31 family. As to expression, highly expressed in thymus, spleen, kidney and testis and, to a lesser extent, in brain and liver.

The protein resides in the golgi apparatus membrane. It catalyses the reaction a ganglioside GM2 (d18:1(4E)) + UDP-alpha-D-galactose = a ganglioside GM1 (d18:1(4E)) + UDP + H(+). It carries out the reaction a ganglioside GM2 + UDP-alpha-D-galactose = a ganglioside GM1 + UDP + H(+). The enzyme catalyses a ganglioside GD2 (d18:1(4E)) + UDP-alpha-D-galactose = a ganglioside GD1b (d18:1(4E)) + UDP + H(+). The catalysed reaction is a ganglioside GA2 (d18:1(4E)) + UDP-alpha-D-galactose = a ganglioside GA1 (d18:1(4E)) + UDP + H(+). It participates in protein modification; protein glycosylation. Involved in GM1/GD1B/GA1 ganglioside biosynthesis. The chain is Beta-1,3-galactosyltransferase 4 (B3galt4) from Rattus norvegicus (Rat).